The sequence spans 37 residues: MKVRASVKKICDNCRLIRRRKRIMVVCSNPKHKQRQG.

Belongs to the bacterial ribosomal protein bL36 family.

The protein resides in the plastid. Its subcellular location is the chloroplast. The chain is Large ribosomal subunit protein bL36c from Physcomitrium patens (Spreading-leaved earth moss).